The primary structure comprises 388 residues: Galactokinase (388 aa).

33–36 (EHTD) provides a ligand contact to substrate. ATP contacts are provided by residues serine 67 and 125–131 (GSGLSSS). Positions 131 and 163 each coordinate Mg(2+). Residue aspartate 175 is the Proton acceptor of the active site. Tyrosine 225 is a substrate binding site.

This sequence belongs to the GHMP kinase family. GalK subfamily.

The protein localises to the cytoplasm. The enzyme catalyses alpha-D-galactose + ATP = alpha-D-galactose 1-phosphate + ADP + H(+). The protein operates within carbohydrate metabolism; galactose metabolism. In terms of biological role, catalyzes the transfer of the gamma-phosphate of ATP to D-galactose to form alpha-D-galactose-1-phosphate (Gal-1-P). This chain is Galactokinase, found in Lactobacillus helveticus (Lactobacillus suntoryeus).